A 294-amino-acid polypeptide reads, in one-letter code: Diaminopimelate epimerase (294 aa).

Residues N11 and N78 each coordinate substrate. C87 (proton donor) is an active-site residue. Residues 88–89, N167, N203, and 221–222 each bind substrate; these read GN and ER. C230 (proton acceptor) is an active-site residue. Position 231-232 (231-232) interacts with substrate; it reads GT.

Belongs to the diaminopimelate epimerase family. As to quaternary structure, homodimer.

It localises to the cytoplasm. It catalyses the reaction (2S,6S)-2,6-diaminopimelate = meso-2,6-diaminopimelate. The protein operates within amino-acid biosynthesis; L-lysine biosynthesis via DAP pathway; DL-2,6-diaminopimelate from LL-2,6-diaminopimelate: step 1/1. In terms of biological role, catalyzes the stereoinversion of LL-2,6-diaminopimelate (L,L-DAP) to meso-diaminopimelate (meso-DAP), a precursor of L-lysine and an essential component of the bacterial peptidoglycan. The polypeptide is Diaminopimelate epimerase (Mycobacterium avium (strain 104)).